Consider the following 543-residue polypeptide: CTP synthase (543 aa).

The amidoligase domain stretch occupies residues 1 to 265 (MARFIFITGG…DSEVLRAFGI (265 aa)). Ser-13 contributes to the CTP binding site. Ser-13 contributes to the UTP binding site. 14–19 (SLGKGL) lines the ATP pocket. Tyr-54 is a binding site for L-glutamine. Asp-71 is a binding site for ATP. The Mg(2+) site is built by Asp-71 and Glu-139. Residues 146-148 (DIE), 186-191 (KTKPTQ), and Lys-222 each bind CTP. UTP is bound by residues 186 to 191 (KTKPTQ) and Lys-222. The 252-residue stretch at 291-542 (TIGVVGKYVS…IEAAVKQSRL (252 aa)) folds into the Glutamine amidotransferase type-1 domain. Gly-354 is an L-glutamine binding site. The active-site Nucleophile; for glutamine hydrolysis is Cys-381. Residues 382–385 (LGMQ), Glu-405, and Arg-470 each bind L-glutamine. Catalysis depends on residues His-515 and Glu-517.

Belongs to the CTP synthase family. In terms of assembly, homotetramer.

The catalysed reaction is UTP + L-glutamine + ATP + H2O = CTP + L-glutamate + ADP + phosphate + 2 H(+). It carries out the reaction L-glutamine + H2O = L-glutamate + NH4(+). It catalyses the reaction UTP + NH4(+) + ATP = CTP + ADP + phosphate + 2 H(+). It participates in pyrimidine metabolism; CTP biosynthesis via de novo pathway; CTP from UDP: step 2/2. With respect to regulation, allosterically activated by GTP, when glutamine is the substrate; GTP has no effect on the reaction when ammonia is the substrate. The allosteric effector GTP functions by stabilizing the protein conformation that binds the tetrahedral intermediate(s) formed during glutamine hydrolysis. Inhibited by the product CTP, via allosteric rather than competitive inhibition. In terms of biological role, catalyzes the ATP-dependent amination of UTP to CTP with either L-glutamine or ammonia as the source of nitrogen. Regulates intracellular CTP levels through interactions with the four ribonucleotide triphosphates. The chain is CTP synthase from Sphingopyxis alaskensis (strain DSM 13593 / LMG 18877 / RB2256) (Sphingomonas alaskensis).